A 470-amino-acid chain; its full sequence is Heparan-sulfate 6-O-sulfotransferase 3 (470 aa).

At 1-4 (MDER) the chain is on the cytoplasmic side. Residues 5 to 27 (FNKWLLTPVLTLLFVVIMYQYVS) form a helical; Signal-anchor for type II membrane protein membrane-spanning segment. At 28–470 (PSCTSSCTNF…EDYNSQVVRW (443 aa)) the chain is on the lumenal side. Residues 36–121 (NFGEQLRSGE…EAPENGSLPR (86 aa)) form a disordered region. A compositionally biased stretch (acidic residues) spans 88-113 (PEDEDEDPGDPEEEEEEEEEEPDPEA). 2 N-linked (GlcNAc...) asparagine glycosylation sites follow: asparagine 116 and asparagine 127. 151 to 159 (HIQKTGGTT) contacts 3'-phosphoadenylyl sulfate. Residues 181-182 (KK), arginine 198, tryptophan 203, and histidine 208 contribute to the substrate site. Histidine 208 serves as the catalytic Proton acceptor. The N-linked (GlcNAc...) asparagine glycan is linked to asparagine 230. Positions 244 and 252 each coordinate 3'-phosphoadenylyl sulfate. Histidine 256 and tryptophan 263 together coordinate substrate. Asparagine 323 and asparagine 328 each carry an N-linked (GlcNAc...) asparagine glycan. 3'-phosphoadenylyl sulfate is bound at residue 376–378 (TQF). Asparagine 379 carries an N-linked (GlcNAc...) asparagine glycan. 382 to 383 (RA) serves as a coordination point for 3'-phosphoadenylyl sulfate. Positions 421–453 (TKQLEHQRDRQKRREERRLQREHRAHRWPKEDR) are disordered. The segment covering 422-439 (KQLEHQRDRQKRREERRL) has biased composition (basic and acidic residues).

It belongs to the sulfotransferase 6 family. Ubiquitously expressed.

The protein localises to the membrane. It catalyses the reaction alpha-D-glucosaminyl-[heparan sulfate](n) + 3'-phosphoadenylyl sulfate = 6-sulfo-alpha-D-glucosaminyl-[heparan sulfate](n) + adenosine 3',5'-bisphosphate + H(+). Functionally, 6-O-sulfation enzyme which catalyzes the transfer of sulfate from 3'-phosphoadenosine 5'-phosphosulfate (PAPS) to position 6 of the N-sulfoglucosamine residue (GlcNS) of heparan sulfate. The sequence is that of Heparan-sulfate 6-O-sulfotransferase 3 (Hs6st3) from Mus musculus (Mouse).